The primary structure comprises 198 residues: Protein GrpE (198 aa).

The segment at 1–58 (MTEKDQSVNNEEFAEKEDNTAKDSNTDEQIEKTASEDDVQNDSSAVDDKEKEIQQLKE) is disordered. 2 stretches are compositionally biased toward basic and acidic residues: residues 16–35 (KEDN…KTAS) and 46–58 (VDDK…QLKE).

The protein belongs to the GrpE family. Homodimer.

It localises to the cytoplasm. Functionally, participates actively in the response to hyperosmotic and heat shock by preventing the aggregation of stress-denatured proteins, in association with DnaK and GrpE. It is the nucleotide exchange factor for DnaK and may function as a thermosensor. Unfolded proteins bind initially to DnaJ; upon interaction with the DnaJ-bound protein, DnaK hydrolyzes its bound ATP, resulting in the formation of a stable complex. GrpE releases ADP from DnaK; ATP binding to DnaK triggers the release of the substrate protein, thus completing the reaction cycle. Several rounds of ATP-dependent interactions between DnaJ, DnaK and GrpE are required for fully efficient folding. This is Protein GrpE from Staphylococcus carnosus (strain TM300).